Consider the following 370-residue polypeptide: 3-dehydroquinate synthase (370 aa).

NAD(+) contacts are provided by residues 112–116 (GVVGD), 136–137 (TS), Lys149, Lys158, and 176–179 (TLRT). 3 residues coordinate Zn(2+): Glu191, His254, and His276.

The protein belongs to the sugar phosphate cyclases superfamily. Dehydroquinate synthase family. The cofactor is Co(2+). Zn(2+) serves as cofactor. Requires NAD(+) as cofactor.

It localises to the cytoplasm. The catalysed reaction is 7-phospho-2-dehydro-3-deoxy-D-arabino-heptonate = 3-dehydroquinate + phosphate. The protein operates within metabolic intermediate biosynthesis; chorismate biosynthesis; chorismate from D-erythrose 4-phosphate and phosphoenolpyruvate: step 2/7. Its function is as follows. Catalyzes the conversion of 3-deoxy-D-arabino-heptulosonate 7-phosphate (DAHP) to dehydroquinate (DHQ). The sequence is that of 3-dehydroquinate synthase from Xanthomonas campestris pv. campestris (strain 8004).